The sequence spans 241 residues: tRNA (guanine-N(7)-)-methyltransferase (241 aa).

4 residues coordinate S-adenosyl-L-methionine: E76, E101, D128, and D150. D150 is a catalytic residue. Substrate is bound by residues K154, D186, and 219 to 222 (TRYE).

The protein belongs to the class I-like SAM-binding methyltransferase superfamily. TrmB family.

It catalyses the reaction guanosine(46) in tRNA + S-adenosyl-L-methionine = N(7)-methylguanosine(46) in tRNA + S-adenosyl-L-homocysteine. It participates in tRNA modification; N(7)-methylguanine-tRNA biosynthesis. Its function is as follows. Catalyzes the formation of N(7)-methylguanine at position 46 (m7G46) in tRNA. The sequence is that of tRNA (guanine-N(7)-)-methyltransferase from Cereibacter sphaeroides (strain ATCC 17023 / DSM 158 / JCM 6121 / CCUG 31486 / LMG 2827 / NBRC 12203 / NCIMB 8253 / ATH 2.4.1.) (Rhodobacter sphaeroides).